A 99-amino-acid chain; its full sequence is Large ribosomal subunit protein bL28 (99 aa).

Residues 1–25 (MSRKCAVTGKGVQTGNNVSHANNKS) form a disordered region. Residues 11-22 (GVQTGNNVSHAN) show a composition bias toward polar residues.

The protein belongs to the bacterial ribosomal protein bL28 family.

This chain is Large ribosomal subunit protein bL28, found in Rhodospirillum centenum (strain ATCC 51521 / SW).